A 492-amino-acid polypeptide reads, in one-letter code: METVETLNEGLKRNYTLTITADEIRKRIDQEVAEAAPRVNLPGFRPGKVPAKLVNKMYGASLAQDALNKALQDGVQKLLSDKGEKPAMQPEIELTEGYELGKDAELKVKFEILPEVPEISFDDLKLERLTVEADNAVIDEKIKEFAEHQKSFDDSKKDHKAENGDLVVVDFVGKVDGEPFEGGTGSDMSVELGAGQFIPGFEEQLVGAKQGESRVLKVTFPEDYSVPYLKGKDAEFDVTVSDVRVPRKAEVNDDFAKSLGLESLDQLRDLMKGQIEQELNGLTRTYMKRKLLDQLADSYSFEVPSQMVEAEFNQIWRQLEHAASHEEDSEAALAEMEKERDEYRAIAERRVRLGLALSDIGAKNNVEVSQNEMNMLISQAAQRYNPADRQRFVEYLRQDPMMAAQLRAPLYEDKVVDILFEKANITDRAVTREELEAAIEAEEDSIGKHDHDHDHKEKASDKPKAKKAAAPKKKAAPKKKAAPKAEKKSSDE.

Residues 164–249 (GDLVVVDFVG…VSDVRVPRKA (86 aa)) form the PPIase FKBP-type domain. The disordered stretch occupies residues 440–492 (EAEEDSIGKHDHDHDHKEKASDKPKAKKAAAPKKKAAPKKKAAPKAEKKSSDE). Basic and acidic residues predominate over residues 445–463 (SIGKHDHDHDHKEKASDKP). The span at 464–482 (KAKKAAAPKKKAAPKKKAA) shows a compositional bias: basic residues. A compositionally biased stretch (basic and acidic residues) spans 483 to 492 (PKAEKKSSDE).

The protein belongs to the FKBP-type PPIase family. Tig subfamily.

Its subcellular location is the cytoplasm. The catalysed reaction is [protein]-peptidylproline (omega=180) = [protein]-peptidylproline (omega=0). Its function is as follows. Involved in protein export. Acts as a chaperone by maintaining the newly synthesized protein in an open conformation. Functions as a peptidyl-prolyl cis-trans isomerase. The sequence is that of Trigger factor from Zymomonas mobilis subsp. mobilis (strain ATCC 31821 / ZM4 / CP4).